The sequence spans 193 residues: Transmembrane protein 276 (193 aa).

Positions 1 to 32 (MTPRPGGEWSSALSHLALGAVSLHAALSTAQA) are cleaved as a signal peptide. 4 helical membrane-spanning segments follow: residues 35 to 55 (GAAAGFLLQALATATMLASGL), 63 to 83 (AGAWVATVIGLPLLAFDFHWV), 89 to 109 (SANLLLGGGMVLAVAGDHLGA), and 114 to 134 (VAGQAVVLVVAVTILIVAVFT).

It localises to the membrane. The protein is Transmembrane protein 276 of Bos taurus (Bovine).